Here is a 148-residue protein sequence, read N- to C-terminus: uncharacterized protein (148 aa).

Residues 7–29 traverse the membrane as a helical segment; sequence MLILMSLVKIVLTCLPTGVIEWL.

The protein localises to the membrane. This is an uncharacterized protein from Bacillus subtilis (strain 168).